Reading from the N-terminus, the 647-residue chain is 1-deoxy-D-xylulose-5-phosphate synthase (647 aa).

Residues H88 and 129–131 (GHA) contribute to the thiamine diphosphate site. D160 is a binding site for Mg(2+). Thiamine diphosphate-binding positions include 161–162 (GA), N189, Y300, and E377. Position 189 (N189) interacts with Mg(2+).

The protein belongs to the transketolase family. DXPS subfamily. Homodimer. The cofactor is Mg(2+). Thiamine diphosphate is required as a cofactor.

It carries out the reaction D-glyceraldehyde 3-phosphate + pyruvate + H(+) = 1-deoxy-D-xylulose 5-phosphate + CO2. It participates in metabolic intermediate biosynthesis; 1-deoxy-D-xylulose 5-phosphate biosynthesis; 1-deoxy-D-xylulose 5-phosphate from D-glyceraldehyde 3-phosphate and pyruvate: step 1/1. Functionally, catalyzes the acyloin condensation reaction between C atoms 2 and 3 of pyruvate and glyceraldehyde 3-phosphate to yield 1-deoxy-D-xylulose-5-phosphate (DXP). The polypeptide is 1-deoxy-D-xylulose-5-phosphate synthase (Dehalococcoides mccartyi (strain ATCC BAA-2266 / KCTC 15142 / 195) (Dehalococcoides ethenogenes (strain 195))).